The chain runs to 342 residues: Foldase protein PrsA (342 aa).

The first 22 residues, 1–22, serve as a signal peptide directing secretion; sequence MVSVKKIVASALVGVLMFSAVG. The N-palmitoyl cysteine moiety is linked to residue Cys-23. A lipid anchor (S-diacylglycerol cysteine) is attached at Cys-23. Residues 189–284 form the PpiC domain; it reads DSGVLTKHLL…FGYHIIQAGA (96 aa).

Belongs to the PrsA family.

It is found in the cell membrane. It carries out the reaction [protein]-peptidylproline (omega=180) = [protein]-peptidylproline (omega=0). Functionally, plays a major role in protein secretion by helping the post-translocational extracellular folding of several secreted proteins. This is Foldase protein PrsA from Clostridium perfringens (strain ATCC 13124 / DSM 756 / JCM 1290 / NCIMB 6125 / NCTC 8237 / Type A).